The primary structure comprises 596 residues: ATP-dependent lipid A-core flippase (596 aa).

Helical transmembrane passes span 34–54, 80–100, 138–158, 164–184, 263–283, and 292–312; these read VWVL…EAGI, AAVV…GYLL, AVVF…ITLV, VVFL…IVAI, QPLT…IAVV, and VGGF…LKHL. One can recognise an ABC transmembrane type-1 domain in the interval 38 to 321; sequence VAGVLAMAAV…LMDVNQPLQR (284 aa). One can recognise an ABC transporter domain in the interval 353-589; sequence IEFSHVSFSY…GGLYAHLHRI (237 aa). ATP is bound at residue 389–396; it reads GPSGSGKT.

Belongs to the ABC transporter superfamily. Lipid exporter (TC 3.A.1.106) family. As to quaternary structure, homodimer.

The protein localises to the cell inner membrane. The enzyme catalyses ATP + H2O + lipid A-core oligosaccharideSide 1 = ADP + phosphate + lipid A-core oligosaccharideSide 2.. Involved in lipopolysaccharide (LPS) biosynthesis. Translocates lipid A-core from the inner to the outer leaflet of the inner membrane. Transmembrane domains (TMD) form a pore in the inner membrane and the ATP-binding domain (NBD) is responsible for energy generation. The sequence is that of ATP-dependent lipid A-core flippase from Burkholderia thailandensis (strain ATCC 700388 / DSM 13276 / CCUG 48851 / CIP 106301 / E264).